We begin with the raw amino-acid sequence, 225 residues long: MVSIYFFFFFLLFYALGSFPTGLIIGKLTQKKDLRLVGSRNVGATNASRILGFKWGIVVFLFDFAKGLVPAIICLRFKNFKDLIFINGCDNRYKDIAICLLVILPIFGHMFSIFNKFKGGKAIATSVGVITAINPFIGLLGILFFVLLFIFVGYASLASIMATLLVDLLLFFINHHPGITNISQNQILYFFIGLSTCFIILKHHSNIIRLWQGKEYKFSFIKKRK.

6 helical membrane-spanning segments follow: residues F6–G26, W55–L75, D95–N115, P135–A155, I160–T180, and I187–I207.

It belongs to the PlsY family. In terms of assembly, probably interacts with PlsX.

It localises to the cell membrane. It catalyses the reaction an acyl phosphate + sn-glycerol 3-phosphate = a 1-acyl-sn-glycero-3-phosphate + phosphate. Its pathway is lipid metabolism; phospholipid metabolism. In terms of biological role, catalyzes the transfer of an acyl group from acyl-phosphate (acyl-PO(4)) to glycerol-3-phosphate (G3P) to form lysophosphatidic acid (LPA). This enzyme utilizes acyl-phosphate as fatty acyl donor, but not acyl-CoA or acyl-ACP. The polypeptide is Glycerol-3-phosphate acyltransferase (Phytoplasma australiense).